The primary structure comprises 157 residues: Electron transfer flavoprotein regulatory factor 1 homolog (157 aa).

This sequence belongs to the complex I LYR family.

The protein localises to the mitochondrion. This chain is Electron transfer flavoprotein regulatory factor 1 homolog, found in Dictyostelium discoideum (Social amoeba).